We begin with the raw amino-acid sequence, 396 residues long: Phosphoglycerate kinase (396 aa).

Substrate contacts are provided by residues 22–24, Arg-37, 60–63, Arg-118, and Arg-151; these read DFN and HFGR. ATP contacts are provided by residues Lys-201, Glu-322, and 352–355; that span reads GGDS.

This sequence belongs to the phosphoglycerate kinase family. In terms of assembly, monomer.

The protein resides in the cytoplasm. The enzyme catalyses (2R)-3-phosphoglycerate + ATP = (2R)-3-phospho-glyceroyl phosphate + ADP. It functions in the pathway carbohydrate degradation; glycolysis; pyruvate from D-glyceraldehyde 3-phosphate: step 2/5. The sequence is that of Phosphoglycerate kinase from Wolbachia pipientis subsp. Culex pipiens (strain wPip).